A 426-amino-acid chain; its full sequence is Glutamyl-tRNA reductase (426 aa).

Substrate-binding positions include 49–52 (TCNR), Ser109, 114–116 (EGQ), and Gln120. Catalysis depends on Cys50, which acts as the Nucleophile. 189-194 (GAGETG) lines the NADP(+) pocket.

The protein belongs to the glutamyl-tRNA reductase family. In terms of assembly, homodimer.

It catalyses the reaction (S)-4-amino-5-oxopentanoate + tRNA(Glu) + NADP(+) = L-glutamyl-tRNA(Glu) + NADPH + H(+). The protein operates within porphyrin-containing compound metabolism; protoporphyrin-IX biosynthesis; 5-aminolevulinate from L-glutamyl-tRNA(Glu): step 1/2. It participates in porphyrin-containing compound metabolism; chlorophyll biosynthesis. Catalyzes the NADPH-dependent reduction of glutamyl-tRNA(Glu) to glutamate 1-semialdehyde (GSA). This Chlorobium phaeobacteroides (strain BS1) protein is Glutamyl-tRNA reductase.